The following is a 582-amino-acid chain: Zinc finger protein somi-1 (582 aa).

Disordered stretches follow at residues 179–251 (LRPE…NNTD) and 352–377 (SAEP…KKEQ). Over residues 188 to 226 (TQKSTNGVHRSTSNSSAETLRNNSVSAATVSPSDDNSLN) the composition is skewed to polar residues. A compositionally biased stretch (low complexity) spans 227 to 244 (SPALTSSGSAGSGTPPLG). Positions 352-368 (SAEPMKRHRVEAHEKQS) are enriched in basic and acidic residues. The C2H2-type; Degenerate zinc-finger motif lies at 454–477 (YICEDCDFVTVYKGNMKRHLNTCH). Residues 513 to 582 (AHKANSSRGR…PPPPPPPMLL (70 aa)) are disordered. Low complexity predominate over residues 551–570 (LLESLASSSSSMGGYSNGNN). The span at 572–582 (QPPPPPPPMLL) shows a compositional bias: pro residues.

May interact with swsn-9; the interaction promotes hypodermal differentiation. In terms of tissue distribution, expressed in hypodermal seam cells, the somatic gonad and vulval precursor cells, body wall muscle and head neurons.

It localises to the nucleus. Its function is as follows. DNA-binding protein which binds to the promoters of let-60, lin-14 and lin-28, possibly to regulate genes involved in hypodermal and vulval development. Together with miRNAs mir-84 and let-7 may direct terminal differentiation of the seam cells, exit from the molting cycle, and vulva formation. Does not regulate the expression of mir-84. May promote hypodermal differentiation in association with swsn-9, a component of SWI/SNF chromatin remodeling complexes. This Caenorhabditis elegans protein is Zinc finger protein somi-1.